The sequence spans 501 residues: Nuclear receptor subfamily 5 group A member 2 (501 aa).

The segment at residues 43–114 is a DNA-binding region (nuclear receptor); the sequence is EELCPVCGDK…KCLSVGMKLE (72 aa). Residues Cys-46, Cys-49, Cys-63, Cys-66, Cys-82, Cys-88, Cys-98, and Cys-101 each contribute to the Zn(2+) site. 2 NR C4-type zinc fingers span residues 46–66 and 82–106; these read CPVCGDKVSGYHYGLLTCESC and CIENQNCQIDKTQRKRCPYCRFQKC. The tract at residues 112-127 is C-terminal extension (CTE); it reads KLEAVRADRMRGGRNK. The FTZ-F1 box motif lies at 128-147; sequence FGPMYKRDRALKQQKKALIR. The interval 186–207 is disordered; that stretch reads NHTALPPTDYDRSPFVTSPISM. The NR LBD domain occupies 260-499; sequence SIPHLILELQ…NLLIEMLHAK (240 aa). A phospholipid derivative is bound by residues 381 to 384, Tyr-476, and Lys-480; that span reads GATL. Positions 488-499 are AF-2; it reads CNNLLIEMLHAK.

The protein belongs to the nuclear hormone receptor family. NR5 subfamily. In terms of assembly, monomer; Binds DNA as a monomer. Detected in liver and adrenal gland.

Its subcellular location is the nucleus. It localises to the chromosome. Functionally, orphan nuclear receptor that binds DNA as a monomer to the 5'-TCAAGGCCA-3' sequence and controls expression of target genes: regulates key biological processes, such as cholesterol and bile acid synthesis pathways, as well as cartilage, liver and pancreas morphogenesis. Ligand-binding causes conformational change which causes recruitment of coactivators, promoting target gene activation. The specific ligand is unknown, but specific phospholipids, such as phosphatidylethanolamine, phosphatidylserine, dilauroyl phosphatidylcholine and diundecanoyl phosphatidylcholine can act as ligand in vitro. Acts as a pioneer transcription factor, which unwraps target DNA from histones and elicits local opening of closed chromatin. Involved in the formation of connective tissue in lower jaw. The protein is Nuclear receptor subfamily 5 group A member 2 of Gallus gallus (Chicken).